A 65-amino-acid chain; its full sequence is Hirudin-2B (65 aa).

The interaction with thrombin active site stretch occupies residues 1 to 3 (ITY). 3 cysteine pairs are disulfide-bonded: Cys-6–Cys-14, Cys-16–Cys-28, and Cys-22–Cys-39. The disordered stretch occupies residues 39–65 (CVTGEGTPKPQSHNDGDFEEIPEEYLQ). The O-linked (GalNAc...) threonine glycan is linked to Thr-45. The interaction with fibrinogen-binding exosite of thrombin stretch occupies residues 55–65 (DFEEIPEEYLQ). Over residues 55-65 (DFEEIPEEYLQ) the composition is skewed to acidic residues. Tyr-63 carries the post-translational modification Sulfotyrosine.

This sequence belongs to the protease inhibitor I14 (hirudin) family.

It is found in the secreted. Its function is as follows. Hirudin is a potent thrombin-specific protease inhibitor. It forms a stable non-covalent complex with alpha-thrombin, thereby abolishing its ability to cleave fibrinogen. This is Hirudin-2B from Hirudo medicinalis (Medicinal leech).